Here is an 84-residue protein sequence, read N- to C-terminus: Putative defensin-like protein 114 (84 aa).

The signal sequence occupies residues 1 to 24; it reads MAITKKCFAAFVLILLFVMPFVYC. 4 disulfides stabilise this stretch: cysteine 41–cysteine 81, cysteine 47–cysteine 69, cysteine 54–cysteine 79, and cysteine 58–cysteine 80.

It belongs to the DEFL family.

The protein resides in the secreted. This Arabidopsis thaliana (Mouse-ear cress) protein is Putative defensin-like protein 114.